A 444-amino-acid chain; its full sequence is GTPase Der (444 aa).

EngA-type G domains are found at residues Pro-3–Glu-167 and Leu-180–Gln-353. GTP contacts are provided by residues Gly-9–Ser-16, Asp-56–Met-60, Asn-119–Asp-122, Gly-186–Ser-193, Asp-233–Val-237, and Asn-298–Asp-301. Residues Ile-354–His-438 enclose the KH-like domain.

It belongs to the TRAFAC class TrmE-Era-EngA-EngB-Septin-like GTPase superfamily. EngA (Der) GTPase family. As to quaternary structure, associates with the 50S ribosomal subunit.

In terms of biological role, GTPase that plays an essential role in the late steps of ribosome biogenesis. The chain is GTPase Der from Solidesulfovibrio magneticus (strain ATCC 700980 / DSM 13731 / RS-1) (Desulfovibrio magneticus).